Consider the following 139-residue polypeptide: Putative pre-16S rRNA nuclease (139 aa).

The protein belongs to the YqgF nuclease family.

It is found in the cytoplasm. In terms of biological role, could be a nuclease involved in processing of the 5'-end of pre-16S rRNA. The polypeptide is Putative pre-16S rRNA nuclease (Bacillus licheniformis (strain ATCC 14580 / DSM 13 / JCM 2505 / CCUG 7422 / NBRC 12200 / NCIMB 9375 / NCTC 10341 / NRRL NRS-1264 / Gibson 46)).